Consider the following 159-residue polypeptide: Mediator of RNA polymerase II transcription subunit 10 (159 aa).

The tract at residues 54–77 (STHTKPQPPSQDDEQKGSANDPLL) is disordered.

It belongs to the Mediator complex subunit 10 family. Component of the Mediator complex.

It localises to the nucleus. In terms of biological role, component of the Mediator complex, a coactivator involved in the regulated transcription of nearly all RNA polymerase II-dependent genes. Mediator functions as a bridge to convey information from gene-specific regulatory proteins to the basal RNA polymerase II transcription machinery. Mediator is recruited to promoters by direct interactions with regulatory proteins and serves as a scaffold for the assembly of a functional preinitiation complex with RNA polymerase II and the general transcription factors. In Aspergillus fumigatus (strain ATCC MYA-4609 / CBS 101355 / FGSC A1100 / Af293) (Neosartorya fumigata), this protein is Mediator of RNA polymerase II transcription subunit 10 (nut2).